The chain runs to 588 residues: 2-succinyl-5-enolpyruvyl-6-hydroxy-3-cyclohexene-1-carboxylate synthase (588 aa).

It belongs to the TPP enzyme family. MenD subfamily. In terms of assembly, homodimer. Requires Mg(2+) as cofactor. The cofactor is Mn(2+). It depends on thiamine diphosphate as a cofactor.

The enzyme catalyses isochorismate + 2-oxoglutarate + H(+) = 5-enolpyruvoyl-6-hydroxy-2-succinyl-cyclohex-3-ene-1-carboxylate + CO2. It functions in the pathway quinol/quinone metabolism; 1,4-dihydroxy-2-naphthoate biosynthesis; 1,4-dihydroxy-2-naphthoate from chorismate: step 2/7. The protein operates within cofactor biosynthesis; phylloquinone biosynthesis. Functionally, catalyzes the thiamine diphosphate-dependent decarboxylation of 2-oxoglutarate and the subsequent addition of the resulting succinic semialdehyde-thiamine pyrophosphate anion to isochorismate to yield 2-succinyl-5-enolpyruvyl-6-hydroxy-3-cyclohexene-1-carboxylate (SEPHCHC). This chain is 2-succinyl-5-enolpyruvyl-6-hydroxy-3-cyclohexene-1-carboxylate synthase, found in Prochlorococcus marinus (strain MIT 9515).